Consider the following 746-residue polypeptide: MATQRVTRNSQQQNRISQGSNSRQTSLLDWMVKDKSGNFKSVLKESSSVEDSTRTDDRTEGALQVAVGYFQKGPKKASLSKDKVLEKHLTTVENVALSNGLAPEAIDILLNVALSGKFGNAVNSRILKCMIPESHISEDSVLKAVSWLCVDKCSGNTKVLFYRWLVAMFDFIDHKKQISSLYGFFFASLQDDTLCPYVCHLLYLLTKRENVKPFRVRKLLDLQAKMGMQPHLQALLSLYKFFAPTLISVSLPVRKKIFFNNSKNLWTSASLAVRLRNQGAFPEPLNLPLRPTTGRSLKRKWNSHSVIPALNSANKEYGEKTASLFDYLSSERSLPLEQLQRFPQLLESIHCLELPSQMCSVLNSPLLLHYINCVKDESILLRISYWLSQALQEECVWYNINNYEQEKEFINFLDLVIRVQCFLQEGFYSCEAFLYKSLPLWDGSSCRSQYLQLLAWIPFSSFSEVKPLLSDHLAPLFFTSSIYFKCSVLQSLQELLQNWLLWLSTDAHVQPTTDSPLETTLGGSMSSVSQLIEYTGWLCVVAMRLESSSTLLLHFILDFYEKVCDIYINYDLPIVVLFPPVIFHSALLSLDATILNQLCYIMYRYRNNWTAAKKNRYLQKAKPEFSLSSKICKEYNYYLTAMVCCLWTSRPFKAGVYTDPETIENTGGTQYKSTLNIVYHPSLLSYAASFLLQESPEEMTEHLSSIQGKKWNWYLDYLYSEGFQGLKLFIKSSVHSSVPKPEENTE.

Residues methionine 1–glutamine 24 form a disordered region.

It belongs to the CENP-I/CTF3 family. In terms of assembly, component of the CENPA-CAD complex, composed of CENPI, CENPK, CENPL, CENPO, CENPP, CENPQ, CENPR and CENPS. The CENPA-CAD complex interacts with the CENPA-NAC complex, at least composed of CENPA, CENPC, CENPH, CENPM, CENPN, CENPT and CENPU. Interacts with SENP6. In terms of processing, sumoylated. Sumoylated form can be polyubiquitinated by RNF4, leading to its degradation. Desumoylation by SENP6 prevents its degradation.

It localises to the nucleus. The protein localises to the chromosome. Its subcellular location is the centromere. In terms of biological role, component of the CENPA-CAD (nucleosome distal) complex, a complex recruited to centromeres which is involved in assembly of kinetochore proteins, mitotic progression and chromosome segregation. May be involved in incorporation of newly synthesized CENPA into centromeres via its interaction with the CENPA-NAC complex. Required for the localization of CENPF, MAD1L1 and MAD2 (MAD2L1 or MAD2L2) to kinetochores. Involved in the response of gonadal tissues to follicle-stimulating hormone. The sequence is that of Centromere protein I (Cenpi) from Mus musculus (Mouse).